Here is a 203-residue protein sequence, read N- to C-terminus: MILSDADILDRLAEGDLVVEPLDDVDQQVQPASVDLRLGERFLEFQRTNIPCIHPTEADEVGDYVTETRVPEGEEFILHPGDFVLGTTTERVEIPPDLLATVQGRSSLGRLAIVIHATAGIVDPGYKGQITLELSNLGTAPVALTPGMRVSQLIFTELKSPAKRPYGVERGSKYQDQDGPQASRIGSDPEFHSDENQAAEHES.

DCTP is bound by residues 105–110, Asp-123, 131–133, Gln-152, Tyr-166, Lys-173, and Gln-177; these read RSSLGR and TLE. Glu-133 functions as the Proton donor/acceptor in the catalytic mechanism. Positions 164-203 are disordered; the sequence is RPYGVERGSKYQDQDGPQASRIGSDPEFHSDENQAAEHES. Residues 166-176 show a composition bias toward basic and acidic residues; it reads YGVERGSKYQD. Positions 187-203 are enriched in basic and acidic residues; it reads SDPEFHSDENQAAEHES.

It belongs to the dCTP deaminase family. As to quaternary structure, homotrimer.

The enzyme catalyses dCTP + H2O + H(+) = dUTP + NH4(+). Its pathway is pyrimidine metabolism; dUMP biosynthesis; dUMP from dCTP (dUTP route): step 1/2. Catalyzes the deamination of dCTP to dUTP. This Halorubrum lacusprofundi (strain ATCC 49239 / DSM 5036 / JCM 8891 / ACAM 34) protein is dCTP deaminase.